The sequence spans 622 residues: uncharacterized protein (622 aa).

Positions 302, 306, 310, and 521 each coordinate [4Fe-4S] cluster.

The protein belongs to the AOR/FOR family. [4Fe-4S] cluster serves as cofactor.

This is an uncharacterized protein from Methanocaldococcus jannaschii (strain ATCC 43067 / DSM 2661 / JAL-1 / JCM 10045 / NBRC 100440) (Methanococcus jannaschii).